The primary structure comprises 612 residues: Dihydroxy-acid dehydratase (612 aa).

Asp81 is a Mg(2+) binding site. Residue Cys122 coordinates [2Fe-2S] cluster. Residues Asp123 and Lys124 each contribute to the Mg(2+) site. Position 124 is an N6-carboxylysine (Lys124). Position 193 (Cys193) interacts with [2Fe-2S] cluster. Glu489 is a Mg(2+) binding site. Ser515 functions as the Proton acceptor in the catalytic mechanism.

Belongs to the IlvD/Edd family. As to quaternary structure, homodimer. [2Fe-2S] cluster serves as cofactor. Mg(2+) is required as a cofactor.

It catalyses the reaction (2R)-2,3-dihydroxy-3-methylbutanoate = 3-methyl-2-oxobutanoate + H2O. The catalysed reaction is (2R,3R)-2,3-dihydroxy-3-methylpentanoate = (S)-3-methyl-2-oxopentanoate + H2O. Its pathway is amino-acid biosynthesis; L-isoleucine biosynthesis; L-isoleucine from 2-oxobutanoate: step 3/4. It participates in amino-acid biosynthesis; L-valine biosynthesis; L-valine from pyruvate: step 3/4. In terms of biological role, functions in the biosynthesis of branched-chain amino acids. Catalyzes the dehydration of (2R,3R)-2,3-dihydroxy-3-methylpentanoate (2,3-dihydroxy-3-methylvalerate) into 2-oxo-3-methylpentanoate (2-oxo-3-methylvalerate) and of (2R)-2,3-dihydroxy-3-methylbutanoate (2,3-dihydroxyisovalerate) into 2-oxo-3-methylbutanoate (2-oxoisovalerate), the penultimate precursor to L-isoleucine and L-valine, respectively. The sequence is that of Dihydroxy-acid dehydratase from Stenotrophomonas maltophilia (strain R551-3).